Here is a 175-residue protein sequence, read N- to C-terminus: MEVNATLIDCCDPQKPSRVLFHFLILDAPSPSNLPTYIKELQHRGVRHLVRVCGPTYDATLVKSRGIDVHSWPFDDGAPPTRAVLDSWLKLLDTELARQQEDPSVPPPTIGVHCVAGLGRAPILVALALVEYGNVSALDAIALIREKRKGAINQTQMHWITKYKRRHQGAGCVIM.

Residues 15-172 (KPSRVLFHFL…YKRRHQGAGC (158 aa)) form the Tyrosine-protein phosphatase domain. A disulfide bridge links C53 with C114. D76 functions as the Proton donor in the catalytic mechanism. C114 (phosphocysteine intermediate) is an active-site residue. 116 to 120 (AGLGR) contributes to the substrate binding site. C172 bears the Cysteine methyl ester mark. C172 is lipidated: S-farnesyl cysteine. The propeptide at 173 to 175 (VIM) is removed in mature form.

The protein belongs to the protein-tyrosine phosphatase family.

It localises to the cytoplasm. Its subcellular location is the mitochondrion matrix. It is found in the kinetoplast. The protein resides in the secreted. The protein localises to the extracellular exosome. The catalysed reaction is O-phospho-L-tyrosyl-[protein] + H2O = L-tyrosyl-[protein] + phosphate. Its activity is regulated as follows. Activated in a reduced environment which promotes the reduction of the disulfide bond between the regulatory Cys-53 and catalytic Cys-114 residues. In terms of biological role, has protein tyrosine phosphatase activity and may act as a virulence factor to support intracellular survival in host macrophages. The protein is Protein tyrosine phosphatase PRL-1 of Leishmania major.